A 357-amino-acid polypeptide reads, in one-letter code: Phospho-N-acetylmuramoyl-pentapeptide-transferase (357 aa).

10 helical membrane-spanning segments follow: residues 23-43 (AIFS…YFIY), 70-90 (TMGG…YCNL), 91-111 (SNIY…IGFI), 127-147 (LKWK…MIKI), 171-191 (YLYV…VNLT), 196-216 (GLAI…SLFS), 236-256 (LAIL…FNSY), 260-280 (VFMG…IAIL), 286-306 (LLII…LQII), and 334-354 (LIIV…LISL).

The protein belongs to the glycosyltransferase 4 family. MraY subfamily. Mg(2+) serves as cofactor.

It is found in the cell inner membrane. The enzyme catalyses UDP-N-acetyl-alpha-D-muramoyl-L-alanyl-gamma-D-glutamyl-meso-2,6-diaminopimeloyl-D-alanyl-D-alanine + di-trans,octa-cis-undecaprenyl phosphate = di-trans,octa-cis-undecaprenyl diphospho-N-acetyl-alpha-D-muramoyl-L-alanyl-D-glutamyl-meso-2,6-diaminopimeloyl-D-alanyl-D-alanine + UMP. The protein operates within cell wall biogenesis; peptidoglycan biosynthesis. Its function is as follows. Catalyzes the initial step of the lipid cycle reactions in the biosynthesis of the cell wall peptidoglycan: transfers peptidoglycan precursor phospho-MurNAc-pentapeptide from UDP-MurNAc-pentapeptide onto the lipid carrier undecaprenyl phosphate, yielding undecaprenyl-pyrophosphoryl-MurNAc-pentapeptide, known as lipid I. This chain is Phospho-N-acetylmuramoyl-pentapeptide-transferase, found in Buchnera aphidicola subsp. Acyrthosiphon pisum (strain Tuc7).